Consider the following 421-residue polypeptide: 3-isopropylmalate dehydratase large subunit (421 aa).

[4Fe-4S] cluster is bound by residues Cys302, Cys362, and Cys365.

The protein belongs to the aconitase/IPM isomerase family. LeuC type 2 subfamily. In terms of assembly, heterodimer of LeuC and LeuD. The cofactor is [4Fe-4S] cluster.

The catalysed reaction is (2R,3S)-3-isopropylmalate = (2S)-2-isopropylmalate. It participates in amino-acid biosynthesis; L-leucine biosynthesis; L-leucine from 3-methyl-2-oxobutanoate: step 2/4. Its function is as follows. Catalyzes the isomerization between 2-isopropylmalate and 3-isopropylmalate, via the formation of 2-isopropylmaleate. In Campylobacter curvus (strain 525.92), this protein is 3-isopropylmalate dehydratase large subunit.